The primary structure comprises 80 residues: Omega-conotoxin-like 1 (80 aa).

The signal sequence occupies residues 1-22; the sequence is MKLTCVLIVVVLFLTACQLITT. A propeptide spanning residues 23 to 49 is cleaved from the precursor; sequence DDSTGKQRYQAWKLRSKMQNSVLSRLS. 3 cysteine pairs are disulfide-bonded: cysteine 52–cysteine 66, cysteine 59–cysteine 70, and cysteine 65–cysteine 79.

It belongs to the conotoxin O1 superfamily. In terms of processing, peptide predicted to begin at Arg-51, but it seems more probable that it begins at Cys-52, since this position corresponds to a dibasic residue cleavage. As to expression, expressed by the venom duct.

Its subcellular location is the secreted. Its function is as follows. Omega-conotoxins act at presynaptic membranes, they bind and block voltage-gated calcium channels (Cav). This Conus capitaneus (Captain cone) protein is Omega-conotoxin-like 1.